The sequence spans 150 residues: Viral late gene transcription factor 2 (150 aa).

This sequence belongs to the chordopoxvirinae VLTF-2 family. Interacts with itself. Interacts with the late transcription factors VLTF-1.

In terms of biological role, acts with RNA polymerase to initiate transcription from late gene promoters. The protein is Viral late gene transcription factor 2 (VLTF2) of Homo sapiens (Human).